Here is a 475-residue protein sequence, read N- to C-terminus: MGSKSPEGHRQTPDASNSSELKPANPNPKPARNGSQSADLDGGNLDDDNDDDGEANEEAGVKTSADSTDKKKKRKRSKKKTKKGTLPLKQSSPPRVLVSSLFPSGYPIGECVPYQDDNTSRTTDEELRYNSRLWDKDFLDEYRQAAEIHRQVRQYAQNELIKPGASLTTIAEGIEDGVRALSGHQGLEPGDGFKAGMGFPTGLCLNNVAAHWTPNPGAKDVFLDKSDVLKVDFGVHVNGRIVDSAFTVAFDHTYDNLLTAVKEATNTGIMHAGIDARVSEIGAAIQEVMESYEVEIAGKTHPVKAIRNITGHDILRYNIHGGKQVPFIKNDRPDKMEEGEVFAIETFGSTGRGVLHDDVGLCLSNVFSKANAPQVGVYGYGRNTDVSGANLRLSSAKNLLKTIDANFGSLVFCRRYLERLGVEKYHLGMRHLIDNGIVEYYEPLVDVKGSYTAQFEHTILLHNGGKEVISRGDDY.

The span at 1-12 shows a compositional bias: basic and acidic residues; that stretch reads MGSKSPEGHRQT. The tract at residues 1-97 is disordered; it reads MGSKSPEGHR…LKQSSPPRVL (97 aa). Residues 44–57 are compositionally biased toward acidic residues; that stretch reads NLDDDNDDDGEANE. Basic residues predominate over residues 70-83; that stretch reads KKKKRKRSKKKTKK. His-211 contributes to the substrate binding site. The a divalent metal cation site is built by Asp-232, Asp-243, and His-312. His-320 provides a ligand contact to substrate. A divalent metal cation contacts are provided by Glu-345 and Glu-456.

Belongs to the peptidase M24A family. Methionine aminopeptidase eukaryotic type 2 subfamily. The cofactor is Co(2+). Requires Zn(2+) as cofactor. It depends on Mn(2+) as a cofactor. Fe(2+) is required as a cofactor.

It is found in the cytoplasm. It catalyses the reaction Release of N-terminal amino acids, preferentially methionine, from peptides and arylamides.. In terms of biological role, cotranslationally removes the N-terminal methionine from nascent proteins. The N-terminal methionine is often cleaved when the second residue in the primary sequence is small and uncharged (Met-Ala-, Cys, Gly, Pro, Ser, Thr, or Val). This Aspergillus niger (strain ATCC MYA-4892 / CBS 513.88 / FGSC A1513) protein is Methionine aminopeptidase 2-1.